We begin with the raw amino-acid sequence, 379 residues long: Cobalt-precorrin-5B C(1)-methyltransferase (379 aa).

The protein belongs to the CbiD family.

It catalyses the reaction Co-precorrin-5B + S-adenosyl-L-methionine = Co-precorrin-6A + S-adenosyl-L-homocysteine. It functions in the pathway cofactor biosynthesis; adenosylcobalamin biosynthesis; cob(II)yrinate a,c-diamide from sirohydrochlorin (anaerobic route): step 6/10. In terms of biological role, catalyzes the methylation of C-1 in cobalt-precorrin-5B to form cobalt-precorrin-6A. The chain is Cobalt-precorrin-5B C(1)-methyltransferase from Salmonella choleraesuis (strain SC-B67).